The primary structure comprises 145 residues: 3-dehydroquinate dehydratase (145 aa).

The active-site Proton acceptor is the tyrosine 24. Substrate contacts are provided by asparagine 76, histidine 82, and aspartate 89. Histidine 102 (proton donor) is an active-site residue. Residues 103–104 (VS) and arginine 113 contribute to the substrate site.

It belongs to the type-II 3-dehydroquinase family. Homododecamer.

It catalyses the reaction 3-dehydroquinate = 3-dehydroshikimate + H2O. The protein operates within metabolic intermediate biosynthesis; chorismate biosynthesis; chorismate from D-erythrose 4-phosphate and phosphoenolpyruvate: step 3/7. Functionally, catalyzes a trans-dehydration via an enolate intermediate. This chain is 3-dehydroquinate dehydratase, found in Herminiimonas arsenicoxydans.